The primary structure comprises 75 residues: Large ribosomal subunit protein bL31 (75 aa).

Belongs to the bacterial ribosomal protein bL31 family. Type A subfamily. As to quaternary structure, part of the 50S ribosomal subunit.

Its function is as follows. Binds the 23S rRNA. The sequence is that of Large ribosomal subunit protein bL31 from Chlorobaculum tepidum (strain ATCC 49652 / DSM 12025 / NBRC 103806 / TLS) (Chlorobium tepidum).